A 438-amino-acid polypeptide reads, in one-letter code: PHAF1 protein CG7083 (438 aa).

Belongs to the PHAF1 family.

The protein resides in the cytoplasm. Its subcellular location is the preautophagosomal structure. Its function is as follows. May play a regulatory role in autophagic activity. The sequence is that of PHAF1 protein CG7083 from Drosophila melanogaster (Fruit fly).